Reading from the N-terminus, the 522-residue chain is Light-independent protochlorophyllide reductase subunit B (522 aa).

Aspartate 36 serves as a coordination point for [4Fe-4S] cluster. The active-site Proton donor is the aspartate 290. 425-426 (GL) provides a ligand contact to substrate.

It belongs to the ChlB/BchB/BchZ family. As to quaternary structure, protochlorophyllide reductase is composed of three subunits; ChlL, ChlN and ChlB. Forms a heterotetramer of two ChlB and two ChlN subunits. [4Fe-4S] cluster is required as a cofactor.

The catalysed reaction is chlorophyllide a + oxidized 2[4Fe-4S]-[ferredoxin] + 2 ADP + 2 phosphate = protochlorophyllide a + reduced 2[4Fe-4S]-[ferredoxin] + 2 ATP + 2 H2O. Its pathway is porphyrin-containing compound metabolism; chlorophyll biosynthesis (light-independent). Functionally, component of the dark-operative protochlorophyllide reductase (DPOR) that uses Mg-ATP and reduced ferredoxin to reduce ring D of protochlorophyllide (Pchlide) to form chlorophyllide a (Chlide). This reaction is light-independent. The NB-protein (ChlN-ChlB) is the catalytic component of the complex. In Synechococcus sp. (strain CC9311), this protein is Light-independent protochlorophyllide reductase subunit B.